A 150-amino-acid chain; its full sequence is Large ribosomal subunit protein bL9 (150 aa).

Belongs to the bacterial ribosomal protein bL9 family.

Binds to the 23S rRNA. The sequence is that of Large ribosomal subunit protein bL9 from Streptococcus pneumoniae (strain CGSP14).